Consider the following 569-residue polypeptide: Oxygen-dependent choline dehydrogenase (569 aa).

FAD is bound at residue 9–38 (DYVIIGGGSAGSVLGNRLSEDKDKEVLVLE). His475 acts as the Proton acceptor in catalysis.

This sequence belongs to the GMC oxidoreductase family. FAD is required as a cofactor.

The enzyme catalyses choline + A = betaine aldehyde + AH2. It carries out the reaction betaine aldehyde + NAD(+) + H2O = glycine betaine + NADH + 2 H(+). Its pathway is amine and polyamine biosynthesis; betaine biosynthesis via choline pathway; betaine aldehyde from choline (cytochrome c reductase route): step 1/1. In terms of biological role, involved in the biosynthesis of the osmoprotectant glycine betaine. Catalyzes the oxidation of choline to betaine aldehyde and betaine aldehyde to glycine betaine at the same rate. The protein is Oxygen-dependent choline dehydrogenase of Staphylococcus aureus (strain MSSA476).